Here is a 233-residue protein sequence, read N- to C-terminus: Small ribosomal subunit protein uS5 (233 aa).

The span at 1-13 shows a compositional bias: polar residues; that stretch reads MAEETQNTVATES. The interval 1–40 is disordered; that stretch reads MAEETQNTVATESNNEDRKGRRGQRGEGRRGERRNRREEN. Residues 15–40 show a composition bias toward basic and acidic residues; it reads NEDRKGRRGQRGEGRRGERRNRREEN. Residues 45–108 enclose the S5 DRBM domain; the sequence is LLDRVVTINR…LDAKKHMFSV (64 aa).

This sequence belongs to the universal ribosomal protein uS5 family. Part of the 30S ribosomal subunit. Contacts proteins S4 and S8.

In terms of biological role, with S4 and S12 plays an important role in translational accuracy. Functionally, located at the back of the 30S subunit body where it stabilizes the conformation of the head with respect to the body. The chain is Small ribosomal subunit protein uS5 from Bifidobacterium longum (strain NCC 2705).